We begin with the raw amino-acid sequence, 459 residues long: Putrescine aminotransferase (459 aa).

Residues Gly150–Thr151 and Gln274 contribute to the pyridoxal 5'-phosphate site. Lys300 is subject to N6-(pyridoxal phosphate)lysine. Thr332 lines the pyridoxal 5'-phosphate pocket.

The protein belongs to the class-III pyridoxal-phosphate-dependent aminotransferase family. Putrescine aminotransferase subfamily. The cofactor is pyridoxal 5'-phosphate.

It catalyses the reaction an alkane-alpha,omega-diamine + 2-oxoglutarate = an omega-aminoaldehyde + L-glutamate. It carries out the reaction putrescine + 2-oxoglutarate = 1-pyrroline + L-glutamate + H2O. The enzyme catalyses cadaverine + 2-oxoglutarate = 5-aminopentanal + L-glutamate. It functions in the pathway amine and polyamine degradation; putrescine degradation; 4-aminobutanal from putrescine (transaminase route): step 1/1. In terms of biological role, catalyzes the aminotransferase reaction from putrescine to 2-oxoglutarate, leading to glutamate and 4-aminobutanal, which spontaneously cyclizes to form 1-pyrroline. This is the first step in one of two pathways for putrescine degradation, where putrescine is converted into 4-aminobutanoate (gamma-aminobutyrate or GABA) via 4-aminobutanal. Also functions as a cadaverine transaminase in a a L-lysine degradation pathway to succinate that proceeds via cadaverine, glutarate and L-2-hydroxyglutarate. The protein is Putrescine aminotransferase of Klebsiella pneumoniae subsp. pneumoniae (strain ATCC 700721 / MGH 78578).